The following is a 376-amino-acid chain: Chaperone protein DnaJ (376 aa).

Residues 5–72 (DFYEVLGVPK…QKRAAYDQYG (68 aa)) enclose the J domain. The segment at 136 to 214 (GKEAQIRIPS…CHGQGRVKKQ (79 aa)) adopts a CR-type zinc-finger fold. The Zn(2+) site is built by Cys149, Cys152, Cys166, Cys169, Cys188, Cys191, Cys202, and Cys205. CXXCXGXG motif repeat units follow at residues 149-156 (CETCHGSG), 166-173 (CGTCQGSG), 188-195 (CPHCRGTG), and 202-209 (CTACHGQG). Disordered regions lie at residues 227-246 (DGMR…GGPP) and 352-376 (SLKK…SFFS). Gly residues predominate over residues 237–246 (GEPGTNGGPP). Residues 367 to 376 (WTDRLKSFFS) are compositionally biased toward basic and acidic residues.

It belongs to the DnaJ family. Homodimer. Zn(2+) serves as cofactor.

The protein resides in the cytoplasm. In terms of biological role, participates actively in the response to hyperosmotic and heat shock by preventing the aggregation of stress-denatured proteins and by disaggregating proteins, also in an autonomous, DnaK-independent fashion. Unfolded proteins bind initially to DnaJ; upon interaction with the DnaJ-bound protein, DnaK hydrolyzes its bound ATP, resulting in the formation of a stable complex. GrpE releases ADP from DnaK; ATP binding to DnaK triggers the release of the substrate protein, thus completing the reaction cycle. Several rounds of ATP-dependent interactions between DnaJ, DnaK and GrpE are required for fully efficient folding. Also involved, together with DnaK and GrpE, in the DNA replication of plasmids through activation of initiation proteins. The sequence is that of Chaperone protein DnaJ from Acidovorax sp. (strain JS42).